We begin with the raw amino-acid sequence, 447 residues long: UMP-CMP kinase 2, mitochondrial (447 aa).

Residues 1 to 73 (MALISRPRAP…ELLGPPGRSY (73 aa)) constitute a mitochondrion transit peptide. 259–266 (GLDATGKT) lines the ATP pocket. A coiled-coil region spans residues 380 to 412 (EERVRRLQGRGQEKTKEEAELEANNVFRQKVEM).

This sequence belongs to the thymidylate kinase family. Strongly expressed in the brain.

It localises to the mitochondrion. It catalyses the reaction CMP + ATP = CDP + ADP. It carries out the reaction dCMP + ATP = dCDP + ADP. The catalysed reaction is a 2'-deoxyribonucleoside 5'-diphosphate + ATP = a 2'-deoxyribonucleoside 5'-triphosphate + ADP. The enzyme catalyses a ribonucleoside 5'-diphosphate + ATP = a ribonucleoside 5'-triphosphate + ADP. In terms of biological role, mitochondrial nucleotide monophosphate kinase needed for salvage dNTP synthesis that mediates immunomodulatory and antiviral activities through IFN-dependent and IFN-independent pathways. Restricts the replication of multiple viruses including flaviviruses or coronaviruses. Together with viperin/RSAD2 and ddhCTP, suppresses the replication of several coronaviruses through inhibition of the viral RNA-dependent RNA polymerase activities. Concerning flaviviruses, restricts RNA translation when localized to the mitochondria independently of its kinase activity. Is able to phosphorylate dUMP, dCMP, CMP, UMP and monophosphates of the pyrimidine nucleoside analogs ddC, dFdC, araC, BVDU and FdUrd with ATP as phosphate donor. Efficacy is highest for dUMP followed by dCMP while CMP and UMP are poor substrates. Controls therefore mitochondrial DNA synthesis by supplying required deoxyribonucleotides. CMPK2-dependent mitochondrial DNA synthesis is necessary for the production of oxidized mitochondrial DNA fragments after exposure to NLRP3 activators. In turn, cytosolic oxidized mtDNA associates with the NLRP3 inflammasome complex and is required for its activation. This Mus musculus (Mouse) protein is UMP-CMP kinase 2, mitochondrial (Cmpk2).